The primary structure comprises 63 residues: UPF0337 protein PSPTO_1596 (63 aa).

Residues 20–63 are disordered; the sequence is KQAVGKATDNTKLQAEGKAQELKGEGQQAKGEVKDAVKKGVDKV. The segment covering 50–63 has biased composition (basic and acidic residues); it reads GEVKDAVKKGVDKV.

It belongs to the UPF0337 (CsbD) family.

This is UPF0337 protein PSPTO_1596 from Pseudomonas syringae pv. tomato (strain ATCC BAA-871 / DC3000).